Here is a 145-residue protein sequence, read N- to C-terminus: Small ribosomal subunit protein uS12 (145 aa).

At proline 64 the chain carries Hydroxyproline.

The protein belongs to the universal ribosomal protein uS12 family.

The polypeptide is Small ribosomal subunit protein uS12 (rps23) (Aspergillus fumigatus (strain ATCC MYA-4609 / CBS 101355 / FGSC A1100 / Af293) (Neosartorya fumigata)).